Here is a 95-residue protein sequence, read N- to C-terminus: Co-chaperonin GroES (95 aa).

The segment at 36 to 55 (QEGEVVAVGSGKTLDDGSKV) is disordered.

The protein belongs to the GroES chaperonin family. In terms of assembly, heptamer of 7 subunits arranged in a ring. Interacts with the chaperonin GroEL.

The protein localises to the cytoplasm. Together with the chaperonin GroEL, plays an essential role in assisting protein folding. The GroEL-GroES system forms a nano-cage that allows encapsulation of the non-native substrate proteins and provides a physical environment optimized to promote and accelerate protein folding. GroES binds to the apical surface of the GroEL ring, thereby capping the opening of the GroEL channel. The protein is Co-chaperonin GroES of Natranaerobius thermophilus (strain ATCC BAA-1301 / DSM 18059 / JW/NM-WN-LF).